The sequence spans 219 residues: Vesicle-associated membrane protein 712 (219 aa).

Residues 1 to 189 are Cytoplasmic-facing; that stretch reads MSILYALVAR…NNTVWWRNCK (189 aa). Residues 7-111 enclose the Longin domain; that stretch reads LVARGTVVLA…AMNDEFSRVL (105 aa). Positions 126-186 constitute a v-SNARE coiled-coil homology domain; sequence TISRIKGEMN…RRFNNTVWWR (61 aa). The helical; Anchor for type IV membrane protein transmembrane segment at 190-210 threads the bilayer; that stretch reads LTLLLILVLLVIIYIGVAFAC. Residues 211 to 219 are Vesicular-facing; it reads HGPTLPSCV.

It belongs to the synaptobrevin family. Expressed in flowers, leaves, stems and roots.

The protein resides in the vacuole membrane. Its subcellular location is the prevacuolar compartment membrane. Involved in the targeting and/or fusion of transport vesicles to their target membrane. This Arabidopsis thaliana (Mouse-ear cress) protein is Vesicle-associated membrane protein 712.